Reading from the N-terminus, the 429-residue chain is Histidine--tRNA ligase (429 aa).

The protein belongs to the class-II aminoacyl-tRNA synthetase family. As to quaternary structure, homodimer.

It localises to the cytoplasm. It carries out the reaction tRNA(His) + L-histidine + ATP = L-histidyl-tRNA(His) + AMP + diphosphate + H(+). The chain is Histidine--tRNA ligase from Pseudomonas aeruginosa (strain UCBPP-PA14).